The following is a 234-amino-acid chain: Uridylate kinase (234 aa).

Position 9–12 (9–12 (KLSG)) interacts with ATP. Gly51 lines the UMP pocket. ATP-binding residues include Gly52 and Arg56. UMP-binding positions include Asp71 and 132-139 (CGNPFFTT). ATP-binding residues include Thr159, Tyr165, and Asp168.

It belongs to the UMP kinase family. In terms of assembly, homohexamer.

The protein resides in the cytoplasm. The enzyme catalyses UMP + ATP = UDP + ADP. It functions in the pathway pyrimidine metabolism; CTP biosynthesis via de novo pathway; UDP from UMP (UMPK route): step 1/1. With respect to regulation, inhibited by UTP. Functionally, catalyzes the reversible phosphorylation of UMP to UDP. The chain is Uridylate kinase from Prochlorococcus marinus (strain MIT 9301).